A 304-amino-acid chain; its full sequence is Elongation factor Ts (304 aa).

An involved in Mg(2+) ion dislocation from EF-Tu region spans residues Thr82 to Val85.

It belongs to the EF-Ts family.

It is found in the cytoplasm. Its function is as follows. Associates with the EF-Tu.GDP complex and induces the exchange of GDP to GTP. It remains bound to the aminoacyl-tRNA.EF-Tu.GTP complex up to the GTP hydrolysis stage on the ribosome. The polypeptide is Elongation factor Ts (Symbiobacterium thermophilum (strain DSM 24528 / JCM 14929 / IAM 14863 / T)).